The sequence spans 246 residues: 7-cyano-7-deazaguanine synthase (246 aa).

24–34 (FSGGLDSTTVL) contributes to the ATP binding site. Residues C209, C219, C222, and C225 each coordinate Zn(2+).

This sequence belongs to the QueC family. Zn(2+) is required as a cofactor.

The enzyme catalyses 7-carboxy-7-deazaguanine + NH4(+) + ATP = 7-cyano-7-deazaguanine + ADP + phosphate + H2O + H(+). It participates in purine metabolism; 7-cyano-7-deazaguanine biosynthesis. Catalyzes the ATP-dependent conversion of 7-carboxy-7-deazaguanine (CDG) to 7-cyano-7-deazaguanine (preQ(0)). The polypeptide is 7-cyano-7-deazaguanine synthase (Polynucleobacter asymbioticus (strain DSM 18221 / CIP 109841 / QLW-P1DMWA-1) (Polynucleobacter necessarius subsp. asymbioticus)).